The following is a 112-amino-acid chain: uncharacterized protein (112 aa).

Residues 5-112 (IFQKIIKGII…LLGGKKLNKI (108 aa)) enclose the HIT domain. The Histidine triad motif motif lies at 98-102 (HLHLH).

This is an uncharacterized protein from Buchnera aphidicola subsp. Baizongia pistaciae (strain Bp).